The chain runs to 919 residues: Calcium-transporting ATPase type 2C member 1 (919 aa).

Residues 1–70 (MKVARFQKIP…NEFDISEDEP (70 aa)) lie on the Cytoplasmic side of the membrane. The chain crosses the membrane as a helical span at residues 71 to 91 (LWKKYISQFKNPLIMLLLASA). Topologically, residues 92–104 (VISVLMHQFDDAV) are lumenal. The helical transmembrane segment at 105-123 (SITVAILIVVTVAFVQEYR) threads the bilayer. Over 124-262 (SEKSLEELSK…APKTPLQKSM (139 aa)) the chain is Cytoplasmic. The helical transmembrane segment at 263–282 (DLLGKQLSFYSFGIIGIIML) threads the bilayer. At 283-294 (VGWLLGKDILEM) the chain is on the lumenal side. The helical transmembrane segment at 295 to 312 (FTISVSLAVAAIPEGLPI) threads the bilayer. Ca(2+) contacts are provided by valine 303, alanine 304, isoleucine 306, and glutamate 308. Residues 313 to 699 (VVTVTLALGV…EEGKGIYNNI (387 aa)) lie on the Cytoplasmic side of the membrane. The active-site 4-aspartylphosphate intermediate is the aspartate 350. Mg(2+) is bound by residues aspartate 644 and aspartate 648. The chain crosses the membrane as a helical span at residues 700 to 719 (KNFVRFQLSTSIAALTLISL). Residues 720–729 (ATLMNFPNPL) are Lumenal-facing. The chain crosses the membrane as a helical span at residues 730–750 (NAMQILWINIIMDGPPAQSLG). Positions 738 and 742 each coordinate Ca(2+). Residues 751–770 (VEPVDKDVIRKPPRNWKDSI) lie on the Cytoplasmic side of the membrane. A helical transmembrane segment spans residues 771–793 (LTKNLILKILVSSIIIVCGTLFV). Over 794–808 (FWRELRDNVITPRDT) the chain is Lumenal. A helical transmembrane segment spans residues 809–828 (TMTFTCFVFFDMFNALSSRS). Topologically, residues 829-841 (QTKSVFEIGLCSN) are cytoplasmic. Residues 842-860 (RMFCYAVLGSIMGQLLVIY) traverse the membrane as a helical segment. The Lumenal portion of the chain corresponds to 861 to 875 (FPPLQKVFQTESLSI). The helical transmembrane segment at 876-896 (LDLLFLLGLTSSVCIVAEIIK) threads the bilayer. Residues 897 to 919 (KVERSREKIQKHVSSTSSSFLEV) lie on the Cytoplasmic side of the membrane.

This sequence belongs to the cation transport ATPase (P-type) (TC 3.A.3) family. Type IIA subfamily. As to quaternary structure, monomer. Homodimer. Found in most tissues except colon, thymus, spleen and leukocytes. Expressed in keratinocytes (at protein level).

It localises to the golgi apparatus. The protein resides in the trans-Golgi network membrane. It is found in the golgi stack membrane. The catalysed reaction is Ca(2+)(in) + ATP + H2O = Ca(2+)(out) + ADP + phosphate + H(+). The enzyme catalyses Mn(2+)(in) + ATP + H2O = Mn(2+)(out) + ADP + phosphate + H(+). ATP-driven pump that supplies the Golgi apparatus with Ca(2+) and Mn(2+) ions, both essential cofactors for processing and trafficking of newly synthesized proteins in the secretory pathway. Within a catalytic cycle, acquires Ca(2+) or Mn(2+) ions on the cytoplasmic side of the membrane and delivers them to the lumenal side. The transfer of ions across the membrane is coupled to ATP hydrolysis and is associated with a transient phosphorylation that shifts the pump conformation from inward-facing to outward-facing state. Plays a primary role in the maintenance of Ca(2+) homeostasis in the trans-Golgi compartment with a functional impact on Golgi and post-Golgi protein sorting as well as a structural impact on cisternae morphology. Responsible for loading the Golgi stores with Ca(2+) ions in keratinocytes, contributing to keratinocyte differentiation and epidermis integrity. Participates in Ca(2+) and Mn(2+) ions uptake into the Golgi store of hippocampal neurons and regulates protein trafficking required for neural polarity. May also play a role in the maintenance of Ca(2+) and Mn(2+) homeostasis and signaling in the cytosol while preventing cytotoxicity. This chain is Calcium-transporting ATPase type 2C member 1, found in Homo sapiens (Human).